Reading from the N-terminus, the 679-residue chain is DNA-directed RNA polymerase subunit beta' (679 aa).

Zn(2+) is bound by residues cysteine 69, cysteine 71, cysteine 84, and cysteine 87. Positions 486, 488, and 490 each coordinate Mg(2+).

Belongs to the RNA polymerase beta' chain family. RpoC1 subfamily. In plastids the minimal PEP RNA polymerase catalytic core is composed of four subunits: alpha, beta, beta', and beta''. When a (nuclear-encoded) sigma factor is associated with the core the holoenzyme is formed, which can initiate transcription. It depends on Mg(2+) as a cofactor. The cofactor is Zn(2+).

It is found in the plastid. It localises to the chloroplast. The catalysed reaction is RNA(n) + a ribonucleoside 5'-triphosphate = RNA(n+1) + diphosphate. DNA-dependent RNA polymerase catalyzes the transcription of DNA into RNA using the four ribonucleoside triphosphates as substrates. The sequence is that of DNA-directed RNA polymerase subunit beta' from Physcomitrium patens (Spreading-leaved earth moss).